Here is a 434-residue protein sequence, read N- to C-terminus: Beta-enolase (434 aa).

A2 bears the N-acetylalanine mark. T72 bears the Phosphothreonine mark. A phosphoserine mark is found at S83 and S157. Substrate-binding residues include H158 and E167. S176 carries the phosphoserine modification. A Phosphothreonine modification is found at T205. Catalysis depends on E210, which acts as the Proton donor. At T229 the chain carries Phosphothreonine. Phosphotyrosine is present on Y236. D245 provides a ligand contact to Mg(2+). Phosphoserine is present on S263. Residues E293 and D318 each coordinate substrate. Positions 293 and 318 each coordinate Mg(2+). The active-site Proton acceptor is the K343. Substrate is bound by residues 370–373 (SHRS) and K394.

It belongs to the enolase family. In terms of assembly, mammalian enolase is composed of 3 isozyme subunits, alpha, beta and gamma, which can form homodimers or heterodimers which are cell-type and development-specific. Interacts with PNKD. Requires Mg(2+) as cofactor.

The protein resides in the cytoplasm. The catalysed reaction is (2R)-2-phosphoglycerate = phosphoenolpyruvate + H2O. It functions in the pathway carbohydrate degradation; glycolysis; pyruvate from D-glyceraldehyde 3-phosphate: step 4/5. Functionally, glycolytic enzyme that catalyzes the conversion of 2-phosphoglycerate to phosphoenolpyruvate. Appears to have a function in striated muscle development and regeneration. In Bos taurus (Bovine), this protein is Beta-enolase (ENO3).